We begin with the raw amino-acid sequence, 645 residues long: Envelope glycoprotein (645 aa).

An N-terminal signal peptide occupies residues 1-36; that stretch reads MEGPTHPKPFKDKTFSWDLIILVGVVRVLLRLDVGM. Residues 37–589 are Extracellular-facing; the sequence is ANPSPHQVYN…FNKSPWFTTL (553 aa). N-linked (GlcNAc...) asparagine; by host glycosylation is found at Asn-46 and Asn-61. Cystine bridges form between Cys-128–Cys-150 and Cys-142–Cys-155. The tract at residues 238–283 is disordered; it reads QAMGPNLVLPEQKPPSRQSQTKSKVATQKPQTNGTTPRSVAPATMS. The segment covering 252 to 275 has biased composition (polar residues); that stretch reads PSRQSQTKSKVATQKPQTNGTTPR. Residues Asn-270, Asn-305, and Asn-310 are each glycosylated (N-linked (GlcNAc...) asparagine; by host). 3 disulfides stabilise this stretch: Cys-315/Cys-318, Cys-315/Cys-542, and Cys-534/Cys-541. The short motif at 315–318 is the CXXC element; that stretch reads CWLC. Asn-334, Asn-337, Asn-377, Asn-393, and Asn-413 each carry an N-linked (GlcNAc...) asparagine; by host glycan. Positions 451–471 are fusion peptide; that stretch reads ISLTVALMLGGLTVGGIAAGV. 2 coiled-coil regions span residues 479–528 and 538–574; these read LETA…ILFL and KEECCFYADHTGLVRDNMAKLRERLKQRQQLFDSQQG. Residues 517–533 form an immunosuppression region; the sequence is LQNRRGLDILFLQGGGL. A CX6CC motif is present at residues 534-542; it reads CAALKEECC. Residues 590 to 610 form a helical membrane-spanning segment; it reads ISSIMGPLLILLLILLFGPCI. Cys-609 is lipidated: S-palmitoyl cysteine; by host. Over 611-645 the chain is Cytoplasmic; it reads LNRLVQFVKDRISVVQALILTQQYQQIQQYDPDRP.

As to quaternary structure, the mature envelope protein (Env) consists of a trimer of SU-TM heterodimers attached by a labile interchain disulfide bond. In terms of processing, specific enzymatic cleavages in vivo yield mature proteins. Envelope glycoproteins are synthesized as an inactive precursor that is N-glycosylated and processed likely by host cell furin or by a furin-like protease in the Golgi to yield the mature SU and TM proteins. The cleavage site between SU and TM requires the minimal sequence [KR]-X-[KR]-R. The R-peptide is released from the C-terminus of the cytoplasmic tail of the TM protein upon particle formation as a result of proteolytic cleavage by the viral protease. Cleavage of this peptide is required for TM to become fusogenic. Post-translationally, the CXXC motif is highly conserved across a broad range of retroviral envelope proteins. It is thought to participate in the formation of a labile disulfide bond possibly with the CX6CC motif present in the transmembrane protein. Isomerization of the intersubunit disulfide bond to an SU intrachain disulfide bond is thought to occur upon receptor recognition in order to allow membrane fusion. The transmembrane protein is palmitoylated. In terms of processing, the R-peptide is palmitoylated.

The protein resides in the virion membrane. Its subcellular location is the host cell membrane. In terms of biological role, the surface protein (SU) attaches the virus to the host cell by binding to its receptor. This interaction triggers the refolding of the transmembrane protein (TM) and is thought to activate its fusogenic potential by unmasking its fusion peptide. Fusion occurs at the host cell plasma membrane. The transmembrane protein (TM) acts as a class I viral fusion protein. Under the current model, the protein has at least 3 conformational states: pre-fusion native state, pre-hairpin intermediate state, and post-fusion hairpin state. During viral and target cell membrane fusion, the coiled coil regions (heptad repeats) assume a trimer-of-hairpins structure, positioning the fusion peptide in close proximity to the C-terminal region of the ectodomain. The formation of this structure appears to drive apposition and subsequent fusion of viral and target cell membranes. Membranes fusion leads to delivery of the nucleocapsid into the cytoplasm. This is Envelope glycoprotein (env) from Feline sarcoma virus (strain SM) (Sm-FeSV).